The following is a 391-amino-acid chain: Formate-dependent phosphoribosylglycinamide formyltransferase (391 aa).

Residues 18–19 (EL) and Glu-78 contribute to the N(1)-(5-phospho-beta-D-ribosyl)glycinamide site. Residues Arg-110, Lys-151, 156 to 161 (SSGKGQ), 191 to 194 (EEFI), and Glu-199 each bind ATP. The ATP-grasp domain maps to 115 to 305 (ELAHEELGIR…EFELHLRAIL (191 aa)). The Mg(2+) site is built by Glu-264 and Glu-276. Residues Asp-283, Lys-353, and 360 to 361 (RR) contribute to the N(1)-(5-phospho-beta-D-ribosyl)glycinamide site.

It belongs to the PurK/PurT family. In terms of assembly, homodimer.

It catalyses the reaction N(1)-(5-phospho-beta-D-ribosyl)glycinamide + formate + ATP = N(2)-formyl-N(1)-(5-phospho-beta-D-ribosyl)glycinamide + ADP + phosphate + H(+). It functions in the pathway purine metabolism; IMP biosynthesis via de novo pathway; N(2)-formyl-N(1)-(5-phospho-D-ribosyl)glycinamide from N(1)-(5-phospho-D-ribosyl)glycinamide (formate route): step 1/1. In terms of biological role, involved in the de novo purine biosynthesis. Catalyzes the transfer of formate to 5-phospho-ribosyl-glycinamide (GAR), producing 5-phospho-ribosyl-N-formylglycinamide (FGAR). Formate is provided by PurU via hydrolysis of 10-formyl-tetrahydrofolate. The sequence is that of Formate-dependent phosphoribosylglycinamide formyltransferase from Nostoc sp. (strain PCC 7120 / SAG 25.82 / UTEX 2576).